A 375-amino-acid polypeptide reads, in one-letter code: Anhydro-N-acetylmuramic acid kinase (375 aa).

12 to 19 contributes to the ATP binding site; that stretch reads GTSLDGVD.

It belongs to the anhydro-N-acetylmuramic acid kinase family.

The catalysed reaction is 1,6-anhydro-N-acetyl-beta-muramate + ATP + H2O = N-acetyl-D-muramate 6-phosphate + ADP + H(+). The protein operates within amino-sugar metabolism; 1,6-anhydro-N-acetylmuramate degradation. It functions in the pathway cell wall biogenesis; peptidoglycan recycling. Its function is as follows. Catalyzes the specific phosphorylation of 1,6-anhydro-N-acetylmuramic acid (anhMurNAc) with the simultaneous cleavage of the 1,6-anhydro ring, generating MurNAc-6-P. Is required for the utilization of anhMurNAc either imported from the medium or derived from its own cell wall murein, and thus plays a role in cell wall recycling. In Mannheimia succiniciproducens (strain KCTC 0769BP / MBEL55E), this protein is Anhydro-N-acetylmuramic acid kinase.